The chain runs to 109 residues: ATP-dependent Clp protease adapter protein ClpS 2 (109 aa).

The segment at 1 to 24 (MAGDGGRSGPSTPSTSVITKTKPR) is disordered.

This sequence belongs to the ClpS family. As to quaternary structure, binds to the N-terminal domain of the chaperone ClpA.

Its function is as follows. Involved in the modulation of the specificity of the ClpAP-mediated ATP-dependent protein degradation. The sequence is that of ATP-dependent Clp protease adapter protein ClpS 2 from Rhodopseudomonas palustris (strain ATCC BAA-98 / CGA009).